The sequence spans 861 residues: DNA mismatch repair protein MutS (861 aa).

618-625 serves as a coordination point for ATP; sequence GPNMGGKS.

This sequence belongs to the DNA mismatch repair MutS family.

This protein is involved in the repair of mismatches in DNA. It is possible that it carries out the mismatch recognition step. This protein has a weak ATPase activity. The polypeptide is DNA mismatch repair protein MutS (Shewanella sp. (strain ANA-3)).